The following is a 484-amino-acid chain: Glutamate--tRNA ligase (484 aa).

Positions 9-19 (PSPTGNLHIGT) match the 'HIGH' region motif. The Zn(2+) site is built by Cys-98, Cys-100, His-125, and His-127. A 'KMSKS' region motif is present at residues 250-254 (KLSKR). Lys-253 contacts ATP.

The protein belongs to the class-I aminoacyl-tRNA synthetase family. Glutamate--tRNA ligase type 1 subfamily. Monomer. Zn(2+) serves as cofactor.

It is found in the cytoplasm. The catalysed reaction is tRNA(Glu) + L-glutamate + ATP = L-glutamyl-tRNA(Glu) + AMP + diphosphate. Functionally, catalyzes the attachment of glutamate to tRNA(Glu) in a two-step reaction: glutamate is first activated by ATP to form Glu-AMP and then transferred to the acceptor end of tRNA(Glu). In Crocosphaera subtropica (strain ATCC 51142 / BH68) (Cyanothece sp. (strain ATCC 51142)), this protein is Glutamate--tRNA ligase.